The sequence spans 147 residues: Large ribosomal subunit protein bL9 (147 aa).

The protein belongs to the bacterial ribosomal protein bL9 family.

Functionally, binds to the 23S rRNA. The protein is Large ribosomal subunit protein bL9 of Marinomonas sp. (strain MWYL1).